The chain runs to 216 residues: Probable nicotinate-nucleotide adenylyltransferase (216 aa).

The protein belongs to the NadD family.

It carries out the reaction nicotinate beta-D-ribonucleotide + ATP + H(+) = deamido-NAD(+) + diphosphate. It participates in cofactor biosynthesis; NAD(+) biosynthesis; deamido-NAD(+) from nicotinate D-ribonucleotide: step 1/1. In terms of biological role, catalyzes the reversible adenylation of nicotinate mononucleotide (NaMN) to nicotinic acid adenine dinucleotide (NaAD). This is Probable nicotinate-nucleotide adenylyltransferase from Geobacillus kaustophilus (strain HTA426).